The primary structure comprises 255 residues: Protein SCO2 homolog, mitochondrial (255 aa).

Residues 1 to 41 constitute a mitochondrion transit peptide; that stretch reads MLLALGPKAWPKLSQFKPLLRISGGETLHRNSRHWAGQGQR. Over 42-49 the chain is Mitochondrial matrix; it reads QGPGLRTR. A helical membrane pass occupies residues 50-67; sequence LLITALFGAGLGWAWLAA. Topologically, residues 68–255 are mitochondrial intermembrane; it reads RAEKEQWRQQ…HIAAFHSVLP (188 aa). Positions 74–248 constitute a Thioredoxin domain; the sequence is WRQQQRTEAL…IVESIRRHIA (175 aa). Cu cation contacts are provided by C122, C126, and H213. Cysteines 122 and 126 form a disulfide.

It belongs to the SCO1/2 family. Homodimer. Interacts with COA6. Found in a complex with TMEM177, COX20, COA6, MT-CO2/COX2, COX18 and SCO1. Interacts with TMEM177 in a COX20-dependent manner. Interacts with COX20 in a MT-CO2/COX2- and COX18-dependent manner. Interacts with COX16. In terms of tissue distribution, expressed in retina, retinal pigment epithelium, and sclera.

It is found in the mitochondrion inner membrane. Its function is as follows. Copper metallochaperone essential for the synthesis and maturation of cytochrome c oxidase subunit II (MT-CO2/COX2) by facilitating the incorporation of copper into the Cu(A) site of MT-CO2/COX2. Could also act as a thiol-disulfide oxidoreductase to regulate the redox state of the cysteines in SCO1 during maturation of MT-CO2/COX2. The sequence is that of Protein SCO2 homolog, mitochondrial (Sco2) from Mus musculus (Mouse).